The following is a 132-amino-acid chain: Small ribosomal subunit protein uS8 (132 aa).

The protein belongs to the universal ribosomal protein uS8 family. Part of the 30S ribosomal subunit. Contacts proteins S5 and S12.

In terms of biological role, one of the primary rRNA binding proteins, it binds directly to 16S rRNA central domain where it helps coordinate assembly of the platform of the 30S subunit. In Caldanaerobacter subterraneus subsp. tengcongensis (strain DSM 15242 / JCM 11007 / NBRC 100824 / MB4) (Thermoanaerobacter tengcongensis), this protein is Small ribosomal subunit protein uS8 (rpsH).